The sequence spans 427 residues: Glutamate-1-semialdehyde 2,1-aminomutase (427 aa).

N6-(pyridoxal phosphate)lysine is present on Lys266.

This sequence belongs to the class-III pyridoxal-phosphate-dependent aminotransferase family. HemL subfamily. Homodimer. It depends on pyridoxal 5'-phosphate as a cofactor.

The protein resides in the cytoplasm. It catalyses the reaction (S)-4-amino-5-oxopentanoate = 5-aminolevulinate. It participates in porphyrin-containing compound metabolism; protoporphyrin-IX biosynthesis; 5-aminolevulinate from L-glutamyl-tRNA(Glu): step 2/2. This chain is Glutamate-1-semialdehyde 2,1-aminomutase, found in Dechloromonas aromatica (strain RCB).